Reading from the N-terminus, the 65-residue chain is Small ribosomal subunit protein bS21 (65 aa).

The protein belongs to the bacterial ribosomal protein bS21 family.

The polypeptide is Small ribosomal subunit protein bS21 (Acidobacterium capsulatum (strain ATCC 51196 / DSM 11244 / BCRC 80197 / JCM 7670 / NBRC 15755 / NCIMB 13165 / 161)).